The chain runs to 408 residues: Histidine--tRNA ligase (408 aa).

It belongs to the class-II aminoacyl-tRNA synthetase family. As to quaternary structure, homodimer.

It is found in the cytoplasm. It catalyses the reaction tRNA(His) + L-histidine + ATP = L-histidyl-tRNA(His) + AMP + diphosphate + H(+). The sequence is that of Histidine--tRNA ligase from Campylobacter concisus (strain 13826).